The primary structure comprises 593 residues: MGEALRGLKRTIMCGESRENNIGEKVTVMGWVQRKRNLGGLIFVDLRDRTGIMQIVFGEEINKEAFEKSDNVKSEYCIAVTGEIVKRQSPNNDMETGAVELKGEDIKILSESETPPIYIKEGLDASENIRLKYRYLDLRRPDMQKIFMIRHKTCKVVRDFLDENGFLEMETPILTKSTPEGARDYLVPSRNYKGMFYALPQSPQIFKQLLMVSGYDKYFQITKCFRDEDLRANRQPEFTQIDMELSFVEEDDVIELNERLLAKVFKEVGGIDVKLPIERMPYKIAMEKYGSDKPDLRFGMEINDLTEAVKNSEFKVFKGAIEAGGSVRAIKAENCATMGRKQIDKLQDFVKTYKAKGLAWIAYKEDEIKSPIAKFLTEEEMKAILEKMDAKAGDLILIVADKNNVVFESLGALRLHIAKELDIINKNEFRFVWITEFPLLAYNEEEGRYQAEHHPFTAIMDEDIELLDTEPGKVRAKAYDIVLNGEELGGGSIRIHDSKLQEKMFSVLGFTKEKAWERFGFLLEAFKFGPPPHGGLAYGLDRMIMFLAGTENIKDVITFPKNQNAFCPLTEAPNVVDENQLEELGIKKIEKED.

Glutamate 180 serves as a coordination point for L-aspartate. The tract at residues 204-207 is aspartate; the sequence is QIFK. Arginine 226 contacts L-aspartate. Residues 226–228 and glutamine 235 each bind ATP; that span reads RDE. L-aspartate is bound at residue histidine 453. Residue glutamate 487 coordinates ATP. Residue arginine 494 coordinates L-aspartate. 539-542 lines the ATP pocket; the sequence is GLDR.

This sequence belongs to the class-II aminoacyl-tRNA synthetase family. Type 1 subfamily. In terms of assembly, homodimer.

It is found in the cytoplasm. The enzyme catalyses tRNA(Asp) + L-aspartate + ATP = L-aspartyl-tRNA(Asp) + AMP + diphosphate. Its function is as follows. Catalyzes the attachment of L-aspartate to tRNA(Asp) in a two-step reaction: L-aspartate is first activated by ATP to form Asp-AMP and then transferred to the acceptor end of tRNA(Asp). The sequence is that of Aspartate--tRNA ligase from Clostridium botulinum (strain Okra / Type B1).